The primary structure comprises 172 residues: Ribosome maturation factor RimM (172 aa).

The PRC barrel domain occupies proline 96–leucine 169.

It belongs to the RimM family. As to quaternary structure, binds ribosomal protein uS19.

It is found in the cytoplasm. Its function is as follows. An accessory protein needed during the final step in the assembly of 30S ribosomal subunit, possibly for assembly of the head region. Essential for efficient processing of 16S rRNA. May be needed both before and after RbfA during the maturation of 16S rRNA. It has affinity for free ribosomal 30S subunits but not for 70S ribosomes. This is Ribosome maturation factor RimM from Mycolicibacterium vanbaalenii (strain DSM 7251 / JCM 13017 / BCRC 16820 / KCTC 9966 / NRRL B-24157 / PYR-1) (Mycobacterium vanbaalenii).